Here is a 346-residue protein sequence, read N- to C-terminus: MAHRARWTMSQVTELFNKPLIDLLFEAQQIHRQHFDPRQVQVSTLLSIKTGACPEDCKYCPQSARYKTGLETERLMEVEQVLESARQAKNAGSTRFCMGAAWKNPNDRDMPYLEQMVKGVKALGLESCMTLGTLTDSQAQRLAGAGLDYYNHNLDTSPEFYGNIITTRTYQERLDTLDKVRDAGIKVCSGGIVGLGETVKDRAGLLLQLANLPTPPESVPINMLVKVKGTPLADNDDVDAFDFIRTIAIARIMMPTSYVRLSAGREQMNEQTQAMCFMAGANSIFYGCKLLTTPNPEEDKDLQLFRKLGINPQQTAVLEGDNEQQQRLEQALLTPDTEEYYNAAAL.

Residues 38–256 (RQVQVSTLLS…IAIARIMMPT (219 aa)) enclose the Radical SAM core domain. 3 residues coordinate [4Fe-4S] cluster: Cys53, Cys57, and Cys60. 4 residues coordinate [2Fe-2S] cluster: Cys97, Cys128, Cys188, and Arg260.

Belongs to the radical SAM superfamily. Biotin synthase family. In terms of assembly, homodimer. It depends on [4Fe-4S] cluster as a cofactor. [2Fe-2S] cluster is required as a cofactor.

It carries out the reaction (4R,5S)-dethiobiotin + (sulfur carrier)-SH + 2 reduced [2Fe-2S]-[ferredoxin] + 2 S-adenosyl-L-methionine = (sulfur carrier)-H + biotin + 2 5'-deoxyadenosine + 2 L-methionine + 2 oxidized [2Fe-2S]-[ferredoxin]. The protein operates within cofactor biosynthesis; biotin biosynthesis; biotin from 7,8-diaminononanoate: step 2/2. Catalyzes the conversion of dethiobiotin (DTB) to biotin by the insertion of a sulfur atom into dethiobiotin via a radical-based mechanism. The polypeptide is Biotin synthase (Klebsiella pneumoniae (strain 342)).